The following is a 503-amino-acid chain: MEFSVKSGSPEKQRSACIVVGVFEPRRLSPIAEQLDKISDGYISALLRRGELEGKPGQTLLLHHVPNVLSERILLIGCGKERELDERQYKQVIQKTINTLNDTGSMEAVCFLTELHVKGRNNYWKVRQAVETAKETLYSFDQLKTNKSEPRRPLRKMVFNVPTRRELTSGERAILHGLAIAAGIKAAKDLGNMPPNICNAAYLASQARQLADSYSKNVITRVIGEQQMKELGMHSYLAVGQGSQNESLMSVIEYKGNASEDARPIVLVGKGLTFDSGGISIKPSEGMDEMKYDMCGAAAVYGVMRMVAELQLPINVIGVLAGCENMPGGRAYRPGDVLTTMSGQTVEVLNTDAEGRLVLCDVLTYVERFEPEAVIDVATLTGACVIALGHHITGLMANHNPLAHELIAASEQSGDRAWRLPLGDEYQEQLESNFADMANIGGRPGGAITAGCFLSRFTRKYNWAHLDIAGTAWRSGKAKGATGRPVALLAQFLLNRAGFNGEE.

2 residues coordinate Mn(2+): Lys270 and Asp275. The active site involves Lys282. Mn(2+)-binding residues include Asp293, Asp352, and Glu354. Arg356 is an active-site residue.

Belongs to the peptidase M17 family. It depends on Mn(2+) as a cofactor.

The protein localises to the cytoplasm. The enzyme catalyses Release of an N-terminal amino acid, Xaa-|-Yaa-, in which Xaa is preferably Leu, but may be other amino acids including Pro although not Arg or Lys, and Yaa may be Pro. Amino acid amides and methyl esters are also readily hydrolyzed, but rates on arylamides are exceedingly low.. The catalysed reaction is Release of an N-terminal amino acid, preferentially leucine, but not glutamic or aspartic acids.. In terms of biological role, presumably involved in the processing and regular turnover of intracellular proteins. Catalyzes the removal of unsubstituted N-terminal amino acids from various peptides. The sequence is that of Probable cytosol aminopeptidase from Shigella boydii serotype 4 (strain Sb227).